Here is a 114-residue protein sequence, read N- to C-terminus: Ribonuclease P protein component (114 aa).

It belongs to the RnpA family. As to quaternary structure, consists of a catalytic RNA component (M1 or rnpB) and a protein subunit.

The catalysed reaction is Endonucleolytic cleavage of RNA, removing 5'-extranucleotides from tRNA precursor.. RNaseP catalyzes the removal of the 5'-leader sequence from pre-tRNA to produce the mature 5'-terminus. It can also cleave other RNA substrates such as 4.5S RNA. The protein component plays an auxiliary but essential role in vivo by binding to the 5'-leader sequence and broadening the substrate specificity of the ribozyme. The polypeptide is Ribonuclease P protein component (Borrelia turicatae (strain 91E135)).